Here is a 763-residue protein sequence, read N- to C-terminus: Thiamine biosynthesis multifunctional protein ThiED (763 aa).

The interval Met1–Leu210 is thiamine-phosphate synthase. Residues Gln37–Lys41 and Asn69 contribute to the 4-amino-2-methyl-5-(diphosphooxymethyl)pyrimidine site. 2 residues coordinate Mg(2+): Asp70 and Asp88. Ser107 serves as a coordination point for 4-amino-2-methyl-5-(diphosphooxymethyl)pyrimidine. Thr140–Thr142 serves as a coordination point for 2-[(2R,5Z)-2-carboxy-4-methylthiazol-5(2H)-ylidene]ethyl phosphate. Lys143 lines the 4-amino-2-methyl-5-(diphosphooxymethyl)pyrimidine pocket. Residues Gly174 and Val194–Ser195 each bind 2-[(2R,5Z)-2-carboxy-4-methylthiazol-5(2H)-ylidene]ethyl phosphate. The segment at Leu245–Gly500 is hydroxymethylpyrimidine/phosphomethylpyrimidine kinase. Gln282 lines the 4-amino-5-hydroxymethyl-2-methylpyrimidine pocket. The tract at residues Phe550 to Ser763 is thiaminase-2.

The protein in the N-terminal section; belongs to the thiamine-phosphate synthase family. It in the central section; belongs to the ThiD family. In the C-terminal section; belongs to the thiaminase-2 family. Requires Mg(2+) as cofactor.

The catalysed reaction is 2-[(2R,5Z)-2-carboxy-4-methylthiazol-5(2H)-ylidene]ethyl phosphate + 4-amino-2-methyl-5-(diphosphooxymethyl)pyrimidine + 2 H(+) = thiamine phosphate + CO2 + diphosphate. It carries out the reaction 2-(2-carboxy-4-methylthiazol-5-yl)ethyl phosphate + 4-amino-2-methyl-5-(diphosphooxymethyl)pyrimidine + 2 H(+) = thiamine phosphate + CO2 + diphosphate. It catalyses the reaction 4-methyl-5-(2-phosphooxyethyl)-thiazole + 4-amino-2-methyl-5-(diphosphooxymethyl)pyrimidine + H(+) = thiamine phosphate + diphosphate. The enzyme catalyses 4-amino-5-hydroxymethyl-2-methylpyrimidine + ATP = 4-amino-2-methyl-5-(phosphooxymethyl)pyrimidine + ADP + H(+). The catalysed reaction is 4-amino-2-methyl-5-(phosphooxymethyl)pyrimidine + ATP = 4-amino-2-methyl-5-(diphosphooxymethyl)pyrimidine + ADP. It functions in the pathway cofactor biosynthesis; thiamine diphosphate biosynthesis; 4-amino-2-methyl-5-diphosphomethylpyrimidine from 5-amino-1-(5-phospho-D-ribosyl)imidazole: step 3/3. The protein operates within cofactor biosynthesis; thiamine diphosphate biosynthesis; thiamine phosphate from 4-amino-2-methyl-5-diphosphomethylpyrimidine and 4-methyl-5-(2-phosphoethyl)-thiazole: step 1/1. In terms of biological role, condenses 4-methyl-5-(beta-hydroxyethyl)thiazole monophosphate (THZ-P) and 2-methyl-4-amino-5-hydroxymethyl pyrimidine pyrophosphate (HMP-PP) to form thiamine monophosphate (TMP). Its function is as follows. Catalyzes the phosphorylation of hydroxymethylpyrimidine phosphate (HMP-P) to HMP-PP, and of HMP to HMP-P. This is Thiamine biosynthesis multifunctional protein ThiED (theD) from Corynebacterium glutamicum (strain ATCC 13032 / DSM 20300 / JCM 1318 / BCRC 11384 / CCUG 27702 / LMG 3730 / NBRC 12168 / NCIMB 10025 / NRRL B-2784 / 534).